The sequence spans 366 residues: Anhydro-N-acetylmuramic acid kinase (366 aa).

15–22 (GTSLDGVD) is a binding site for ATP.

It belongs to the anhydro-N-acetylmuramic acid kinase family.

The catalysed reaction is 1,6-anhydro-N-acetyl-beta-muramate + ATP + H2O = N-acetyl-D-muramate 6-phosphate + ADP + H(+). It functions in the pathway amino-sugar metabolism; 1,6-anhydro-N-acetylmuramate degradation. Its pathway is cell wall biogenesis; peptidoglycan recycling. Functionally, catalyzes the specific phosphorylation of 1,6-anhydro-N-acetylmuramic acid (anhMurNAc) with the simultaneous cleavage of the 1,6-anhydro ring, generating MurNAc-6-P. Is required for the utilization of anhMurNAc either imported from the medium or derived from its own cell wall murein, and thus plays a role in cell wall recycling. This Hydrogenovibrio crunogenus (strain DSM 25203 / XCL-2) (Thiomicrospira crunogena) protein is Anhydro-N-acetylmuramic acid kinase.